Consider the following 119-residue polypeptide: BLOC-1-related complex subunit 8 (119 aa).

Position 109 is a phosphoserine (Ser-109).

It belongs to the BORCS8 family. Component of the BLOC-one-related complex (BORC) which is composed of BLOC1S1, BLOC1S2, BORCS5, BORCS6, BORCS7, BORCS8, KXD1 and SNAPIN.

The protein resides in the lysosome membrane. Its function is as follows. As part of the BLOC-one-related complex (BORC), it plays a role in the movement and localization of lysosomes at the cell periphery. Associated with the cytosolic face of lysosomes, BORC recruits ARL8B to the lysosomal membrane and couples lysosomes to microtubule plus-end-directed kinesin motors, driving lysosome movement toward the cell periphery. This Homo sapiens (Human) protein is BLOC-1-related complex subunit 8.